The following is a 317-amino-acid chain: Acetyl-coenzyme A carboxylase carboxyl transferase subunit alpha (317 aa).

The region spanning 41 to 291 (KVDKLLRSTY…SMALDSALRD (251 aa)) is the CoA carboxyltransferase C-terminal domain.

This sequence belongs to the AccA family. As to quaternary structure, acetyl-CoA carboxylase is a heterohexamer composed of biotin carboxyl carrier protein (AccB), biotin carboxylase (AccC) and two subunits each of ACCase subunit alpha (AccA) and ACCase subunit beta (AccD).

It localises to the cytoplasm. The catalysed reaction is N(6)-carboxybiotinyl-L-lysyl-[protein] + acetyl-CoA = N(6)-biotinyl-L-lysyl-[protein] + malonyl-CoA. Its pathway is lipid metabolism; malonyl-CoA biosynthesis; malonyl-CoA from acetyl-CoA: step 1/1. Component of the acetyl coenzyme A carboxylase (ACC) complex. First, biotin carboxylase catalyzes the carboxylation of biotin on its carrier protein (BCCP) and then the CO(2) group is transferred by the carboxyltransferase to acetyl-CoA to form malonyl-CoA. In Paramagnetospirillum magneticum (strain ATCC 700264 / AMB-1) (Magnetospirillum magneticum), this protein is Acetyl-coenzyme A carboxylase carboxyl transferase subunit alpha.